The primary structure comprises 324 residues: NAD(P)H-dependent D-xylose reductase XYR1 (324 aa).

The active-site Proton donor is Y50. Residue H112 participates in substrate binding. NAD(+) contacts are provided by residues 168–169 (SN), 217–226 (SSFGPASFKE), and 273–283 (KSSREKTMKSN).

The protein belongs to the aldo/keto reductase family.

The enzyme catalyses xylitol + NAD(+) = D-xylose + NADH + H(+). The catalysed reaction is xylitol + NADP(+) = D-xylose + NADPH + H(+). Its pathway is carbohydrate metabolism; D-xylose degradation. Functionally, catalyzes the initial reaction in the xylose utilization pathway by reducing D-xylose into xylitol. Xylose is a major component of hemicelluloses such as xylan. Most fungi utilize D-xylose via three enzymatic reactions, xylose reductase (XR), xylitol dehydrogenase (XDH), and xylulokinase, to form xylulose 5-phosphate, which enters pentose phosphate pathway. The protein is NAD(P)H-dependent D-xylose reductase XYR1 (XYR1) of Pyricularia oryzae (strain 70-15 / ATCC MYA-4617 / FGSC 8958) (Rice blast fungus).